The primary structure comprises 218 residues: Adenylate kinase (218 aa).

10–15 serves as a coordination point for ATP; that stretch reads GAGKGT. Positions 30-59 are NMP; it reads STGDMLRAAVKAGSPLGLKVKDIMTSGGLV. AMP contacts are provided by residues Thr31, Arg36, 57–59, 85–88, and Gln92; these read GLV and GFPR. The segment at 122–159 is LID; it reads GRRVHEASGRVYHVKHNAPKTEGVDDETGEPLVQRDDD. Residues Arg123 and 132 to 133 each bind ATP; that span reads VY. AMP is bound by residues Arg156 and Arg167. Position 203 (Gly203) interacts with ATP.

This sequence belongs to the adenylate kinase family. In terms of assembly, monomer.

It localises to the cytoplasm. The catalysed reaction is AMP + ATP = 2 ADP. The protein operates within purine metabolism; AMP biosynthesis via salvage pathway; AMP from ADP: step 1/1. Catalyzes the reversible transfer of the terminal phosphate group between ATP and AMP. Plays an important role in cellular energy homeostasis and in adenine nucleotide metabolism. The polypeptide is Adenylate kinase (Saccharophagus degradans (strain 2-40 / ATCC 43961 / DSM 17024)).